Reading from the N-terminus, the 321-residue chain is Ribosomal RNA small subunit methyltransferase H (321 aa).

S-adenosyl-L-methionine contacts are provided by residues 40 to 42 (GGH), Asp60, Phe84, Asp106, and Gln113.

It belongs to the methyltransferase superfamily. RsmH family.

It is found in the cytoplasm. It catalyses the reaction cytidine(1402) in 16S rRNA + S-adenosyl-L-methionine = N(4)-methylcytidine(1402) in 16S rRNA + S-adenosyl-L-homocysteine + H(+). In terms of biological role, specifically methylates the N4 position of cytidine in position 1402 (C1402) of 16S rRNA. The polypeptide is Ribosomal RNA small subunit methyltransferase H (Haemophilus influenzae (strain PittEE)).